Reading from the N-terminus, the 48-residue chain is Protein PsbN (48 aa).

The helical transmembrane segment at 12–34 (LLIAMVTITFGLTGYGLYTAFGP) threads the bilayer.

Belongs to the PsbN family.

It is found in the cellular thylakoid membrane. May play a role in photosystem I and II biogenesis. The chain is Protein PsbN from Prochlorococcus marinus (strain MIT 9313).